The primary structure comprises 858 residues: Volume-regulated anion channel subunit LRRC8D (858 aa).

The Cytoplasmic portion of the chain corresponds to 1–22 (MFTLAEVASLNDIQPTYRILKP). The chain crosses the membrane as a helical span at residues 23–48 (WWDVFMDYLAVVMLMVAIFAGTMQLT). Over 49 to 163 (KDQVVCLPVL…YHLALPWYSK (115 aa)) the chain is Extracellular. A disulfide bond links Cys-54 and Cys-354. Residues 164–182 (YFPYLALIHTIILMVSSNF) form a helical membrane-spanning segment. Residues 183–308 (WFKYPKTCSK…EDSDLIYKLY (126 aa)) are Cytoplasmic-facing. The segment at 221 to 251 (SEENKQRITGAQTLPKHVSTSSDEGSPSAST) is disordered. Polar residues predominate over residues 227–251 (RITGAQTLPKHVSTSSDEGSPSAST). 3 positions are modified to phosphoserine: Ser-241, Ser-242, and Ser-246. A helical transmembrane segment spans residues 309–328 (VVQTVIKTAKFIFILCYTAN). Over 329–360 (FVNAISFEHVCKPKVEHLIGYEVFECTHNMAY) the chain is Extracellular. A helical transmembrane segment spans residues 361-386 (MLKKLLISYISIICVYGFICLYTLFW). Residues 387–858 (LFRIPLKEYS…DINIPFANGI (472 aa)) lie on the Cytoplasmic side of the membrane. LRR repeat units follow at residues 514 to 534 (NLQE…AFSF), 538 to 559 (HLRC…VYLL), 561 to 582 (NLRE…IGLE), 589 to 609 (HLKI…ITDV), 612 to 632 (HLTK…NSLK), 636 to 657 (NVAE…IFSL), 659 to 680 (NLQE…ISFQ), 684 to 705 (RLTC…ITHV), 707 to 728 (NLES…VFSL), 730 to 751 (KLRC…IGLL), 753 to 774 (NLQH…LFKC), 776 to 797 (KLRT…VGQL), and 799 to 820 (QLTQ…LGQC).

This sequence belongs to the LRRC8 family. Heterohexamer; oligomerizes with other LRRC8 proteins (LRRC8A, LRRC8B, LRRC8C and/or LRRC8E) to form a heterohexamer. In vivo, the subunit composition may depend primarily on expression levels, and heterooligomeric channels containing various proportions of the different LRRC8 proteins may coexist.

Its subcellular location is the cell membrane. The protein localises to the endoplasmic reticulum membrane. The enzyme catalyses chloride(in) = chloride(out). It carries out the reaction iodide(out) = iodide(in). The catalysed reaction is taurine(out) = taurine(in). In terms of biological role, non-essential component of the volume-regulated anion channel (VRAC, also named VSOAC channel), an anion channel required to maintain a constant cell volume in response to extracellular or intracellular osmotic changes. The VRAC channel conducts iodide better than chloride and can also conduct organic osmolytes like taurine. Plays a redundant role in the efflux of amino acids, such as aspartate, in response to osmotic stress. LRRC8A and LRRC8D are required for the uptake of the drug cisplatin. Channel activity requires LRRC8A plus at least one other family member (LRRC8B, LRRC8C, LRRC8D or LRRC8E); channel characteristics depend on the precise subunit composition. Also acts as a regulator of glucose-sensing in pancreatic beta cells: VRAC currents, generated in response to hypotonicity- or glucose-induced beta cell swelling, depolarize cells, thereby causing electrical excitation, leading to increase glucose sensitivity and insulin secretion. VRAC channels containing LRRC8D inhibit transport of immunoreactive cyclic dinucleotide GMP-AMP (2'-3'-cGAMP), an immune messenger produced in response to DNA virus in the cytosol. Mediates the import of the antibiotic blasticidin-S into the cell. The protein is Volume-regulated anion channel subunit LRRC8D of Homo sapiens (Human).